Consider the following 685-residue polypeptide: Stromal interaction molecule 1 (685 aa).

The signal sequence occupies residues 1-22; it reads MDVCVRLALWLLWGLLLHQGQS. The Extracellular segment spans residues 23–213; the sequence is LSHSHSEKAT…LLTRHNHLKD (191 aa). 2 EF-hand domains span residues 64 to 97 and 102 to 126; these read SFEA…EDLN and TVKH…AWKS. Positions 76, 78, 80, 82, and 87 each coordinate Ca(2+). N-linked (GlcNAc...) asparagine glycans are attached at residues Asn-131 and Asn-171. The 69-residue stretch at 132–200 folds into the SAM domain; it reads WTVDEVVQWL…QLKALDTVLF (69 aa). A helical membrane pass occupies residues 214–234; that stretch reads FMLVVSIVIGVGGCWFAYIQN. The Cytoplasmic segment spans residues 235-685; that stretch reads RYSKEHMKKM…LKIFKKPLKK (451 aa). Residues 248–442 are a coiled coil; sequence LEGLHRAEQS…IEILCGFQIV (195 aa). A Phosphoserine modification is found at Ser-257. Positions 344–442 are SOAR/CAD; that stretch reads PEALQKWLQL…IEILCGFQIV (99 aa). The tract at residues 475–483 is contributes to fast Ca(2+)-dependent inactivation of CRAC channels; the sequence is DDVDDMDEE. Residues 490-499 show a composition bias toward low complexity; the sequence is MQSPSLQSSV. The interval 490-542 is disordered; the sequence is MQSPSLQSSVRQRLTEPQHGLGSQRDLTHSDSESSLHMSDRQRVAPKPPQMSR. Position 504 is a phosphothreonine (Thr-504). Phosphoserine is present on Ser-512. Residues 515-532 show a composition bias toward basic and acidic residues; the sequence is DLTHSDSESSLHMSDRQR. Thr-517 is subject to Phosphothreonine. 11 positions are modified to phosphoserine: Ser-519, Ser-521, Ser-523, Ser-524, Ser-567, Ser-575, Ser-602, Ser-608, Ser-618, Ser-621, and Ser-628. The tract at residues 596–685 is disordered; that stretch reads LMELSPSAPP…LKIFKKPLKK (90 aa). Residues 608–620 are compositionally biased toward low complexity; that stretch reads SPHLDSSRSHSPS. Positions 642–645 match the Microtubule tip localization signal motif; that stretch reads TRIP. Residues 655–666 are compositionally biased toward acidic residues; it reads EEDNGSIGEETD. At Ser-660 the chain carries Phosphoserine. Thr-665 is modified (phosphothreonine). A Phosphoserine modification is found at Ser-668. Basic residues predominate over residues 670–685; that stretch reads GRKKFPLKIFKKPLKK. Positions 672–685 are required for generation of inwardly rectifying CRAC currents; it reads KKFPLKIFKKPLKK.

As to quaternary structure, monomer in the presence of Ca(2+); it oligomerizes in absence of Ca(2+). Forms homooligomers and heterooligomers with STIM2. Interacts with pore-forming subunits of CRAC channels, ORAI1, ORAI2 and ORAI3; this interaction is potentiated upon Ca(2+) store depletion. Interacts (via the transmembrane region and the SOAR/CAD domain) with SPPL3; the interaction promotes the binding of STIM1 to ORAI1. Interacts (via the SOAR/CAD domain) with ORAI1. Interacts with MAPRE1; probably required for targeting to the growing microtubule plus ends. Interacts with CRACR2A/EFCAB4B; the interaction is direct and takes place in absence of Ca(2+). Forms a complex with CRACR2A/EFCAB4B and ORAI1 at low concentration of Ca(2+), the complex dissociates at elevated Ca(2+) concentrations. Interacts with SARAF, promoting a slow inactivation of STIM1-dependent SOCE activity, possibly by facilitating the deoligomerization of STIM1. Interacts with EFHB; the interaction takes place upon Ca(2+)-store depletion and inhibits the association with SARAF. Interacts with ASPH (isoform 8). Interacts with SLC35G1; intracellular Ca(2+)-dependent. May interact with ATP1A1, ATP2A2, ATP2B1, ATP2B4, KPNB1 and XPO1; through SLC35G1. Interacts with TMEM203. Interacts with STIMATE, promoting STIM1 conformational switch. Interacts with TMEM178A. Interacts with CASQ1 (via C-terminal end and preferentially with the monomeric form); this interaction increases in response to a depletion of intracellular Ca(2+), decreases both STIM1 aggregation and clustering, interaction of STIM1 with ORAI1 and store-operated Ca(2+) entry (SOCE) activity. Interacts with ADCY8. Glycosylation is required for cell surface expression. In terms of processing, phosphorylated predominantly on Ser residues. As to expression, ubiquitously expressed in various human primary cells and tumor cell lines.

It is found in the cell membrane. The protein localises to the endoplasmic reticulum membrane. It localises to the cytoplasm. Its subcellular location is the cytoskeleton. The protein resides in the sarcoplasmic reticulum. Acts as a Ca(2+) sensor that gates two major inward rectifying Ca(2+) channels at the plasma membrane: Ca(2+) release-activated Ca(2+) (CRAC) channels and arachidonate-regulated Ca(2+)-selective (ARC) channels. Plays a role in mediating store-operated Ca(2+) entry (SOCE), a Ca(2+) influx following depletion of intracellular Ca(2+) stores. Upon Ca(2+) depletion, translocates from the endoplasmic reticulum to the plasma membrane where it activates CRAC channel pore-forming subunits ORA1, ORA2 and ORAI3 to generate sustained and oscillatory Ca(2+) entry. Involved in enamel formation. This Homo sapiens (Human) protein is Stromal interaction molecule 1 (STIM1).